The sequence spans 295 residues: Cyclin-G1 (295 aa).

This sequence belongs to the cyclin family. Cyclin G subfamily.

The protein resides in the nucleus. May play a role in growth regulation. Is associated with G2/M phase arrest in response to DNA damage. May be an intermediate by which p53 mediates its role as an inhibitor of cellular proliferation. This chain is Cyclin-G1 (CCNG1), found in Sus scrofa (Pig).